The following is a 296-amino-acid chain: MAETSNDTPWTVMRLLEWTTDFFRKKGSESPRLDAEILLAHARGCQRIELYTSFDKVPEEEQRVAFRELVRRRGEGAPVAQLVGYREFYSISIRVDENVLVPRPETEHLVIEAIDQIKGRLSDRPSPTVLDIGTGSGAIAVAIAKSLPKTQVTAVDISLTALDIAKWNVENLKLSDRVTLLQSDLFDGLEPDQTFDVICSNPPYISQSEYDELPTTVREFEPRGALLSGPDGTEIIARLLNDSVQRLNDGGQLIIELSPMIAGVSKTLAEQNGGYKEIHLIKDLAGHERILSMQKA.

S-adenosyl-L-methionine is bound by residues 133–137 (GTGSG), D156, and N201. 201–204 (NPPY) contacts substrate.

This sequence belongs to the protein N5-glutamine methyltransferase family. PrmC subfamily.

It catalyses the reaction L-glutaminyl-[peptide chain release factor] + S-adenosyl-L-methionine = N(5)-methyl-L-glutaminyl-[peptide chain release factor] + S-adenosyl-L-homocysteine + H(+). Methylates the class 1 translation termination release factors RF1/PrfA and RF2/PrfB on the glutamine residue of the universally conserved GGQ motif. The protein is Release factor glutamine methyltransferase of Rhodopirellula baltica (strain DSM 10527 / NCIMB 13988 / SH1).